Consider the following 170-residue polypeptide: Adenine phosphoribosyltransferase (170 aa).

It belongs to the purine/pyrimidine phosphoribosyltransferase family. In terms of assembly, homodimer.

It localises to the cytoplasm. It catalyses the reaction AMP + diphosphate = 5-phospho-alpha-D-ribose 1-diphosphate + adenine. Its pathway is purine metabolism; AMP biosynthesis via salvage pathway; AMP from adenine: step 1/1. Its function is as follows. Catalyzes a salvage reaction resulting in the formation of AMP, that is energically less costly than de novo synthesis. The protein is Adenine phosphoribosyltransferase of Streptococcus sanguinis (strain SK36).